Consider the following 101-residue polypeptide: UPF0358 protein EF_2458 (101 aa).

The protein belongs to the UPF0358 family.

In Enterococcus faecalis (strain ATCC 700802 / V583), this protein is UPF0358 protein EF_2458.